Here is a 61-residue protein sequence, read N- to C-terminus: Small ribosomal subunit protein uS14 (61 aa).

Residues cysteine 24, cysteine 27, cysteine 40, and cysteine 43 each coordinate Zn(2+).

The protein belongs to the universal ribosomal protein uS14 family. Zinc-binding uS14 subfamily. Part of the 30S ribosomal subunit. Contacts proteins S3 and S10. The cofactor is Zn(2+).

Binds 16S rRNA, required for the assembly of 30S particles and may also be responsible for determining the conformation of the 16S rRNA at the A site. The sequence is that of Small ribosomal subunit protein uS14 from Bifidobacterium longum (strain DJO10A).